A 97-amino-acid polypeptide reads, in one-letter code: Translation initiation factor 1A (97 aa).

Residues Ile-8–Thr-82 form the S1-like domain.

This sequence belongs to the eIF-1A family.

Its function is as follows. Seems to be required for maximal rate of protein biosynthesis. Enhances ribosome dissociation into subunits and stabilizes the binding of the initiator Met-tRNA(I) to 40 S ribosomal subunits. The sequence is that of Translation initiation factor 1A (eIF1A) from Archaeoglobus fulgidus (strain ATCC 49558 / DSM 4304 / JCM 9628 / NBRC 100126 / VC-16).